The sequence spans 356 residues: Peptide chain release factor 1 (356 aa).

At Q234 the chain carries N5-methylglutamine.

The protein belongs to the prokaryotic/mitochondrial release factor family. Methylated by PrmC. Methylation increases the termination efficiency of RF1.

It localises to the cytoplasm. Peptide chain release factor 1 directs the termination of translation in response to the peptide chain termination codons UAG and UAA. This is Peptide chain release factor 1 from Exiguobacterium sp. (strain ATCC BAA-1283 / AT1b).